A 553-amino-acid chain; its full sequence is CDP-diacylglycerol--glycerol-3-phosphate 3-phosphatidyltransferase, mitochondrial (553 aa).

A mitochondrion-targeting transit peptide spans 1-25 (MAAPAAGPVFWRRLLGLLPGRPGLA). Ser46 bears the Phosphoserine mark. 121–128 (ASLYLGTG) is a binding site for ATP. 2 PLD phosphodiesterase domains span residues 212-238 (TIGLQHIKVYLFDNNVVLSGANLSDSY) and 457-490 (TGWTFHAKGLWLYLAGSSLPCLTLIGSPNFGYRS). Residues His217, Lys219, and Asp224 contribute to the active site.

The protein belongs to the CDP-alcohol phosphatidyltransferase class-II family.

The protein resides in the mitochondrion. The enzyme catalyses a CDP-1,2-diacyl-sn-glycerol + sn-glycerol 3-phosphate = a 1,2-diacyl-sn-glycero-3-phospho-(1'-sn-glycero-3'-phosphate) + CMP + H(+). Its pathway is phospholipid metabolism; phosphatidylglycerol biosynthesis; phosphatidylglycerol from CDP-diacylglycerol: step 1/2. Its activity is regulated as follows. Activated by calcium and magnesium and inhibited by other bivalent cations. Functionally, functions in the biosynthesis of the anionic phospholipids phosphatidylglycerol and cardiolipin. This chain is CDP-diacylglycerol--glycerol-3-phosphate 3-phosphatidyltransferase, mitochondrial (PGS1), found in Cricetulus griseus (Chinese hamster).